Here is a 163-residue protein sequence, read N- to C-terminus: Photosystem II extrinsic protein V (163 aa).

The signal sequence occupies residues 1-26 (MLKRSSWLATLLGLLTVASVSTIVYA). Cysteine 63, cysteine 66, histidine 67, and histidine 118 together coordinate heme c.

It belongs to the cytochrome c family. PsbV subfamily. In terms of assembly, PSII is composed of 1 copy each of membrane proteins PsbA, PsbB, PsbC, PsbD, PsbE, PsbF, PsbH, PsbI, PsbJ, PsbK, PsbL, PsbM, PsbT, PsbY, PsbZ, Psb30/Ycf12, at least 3 peripheral proteins of the oxygen-evolving complex and a large number of cofactors. It forms dimeric complexes. The extrinsic subunits in red algae are PsbO (OEC33), PsbQ', cytochrome c-550 and PsbU. Heme c is required as a cofactor.

The protein resides in the plastid. The protein localises to the chloroplast thylakoid membrane. Functionally, one of the extrinsic, lumenal subunits of photosystem II (PSII). PSII is a light-driven water plastoquinone oxidoreductase, using light energy to abstract electrons from H(2)O, generating a proton gradient subsequently used for ATP formation. The extrinsic proteins stabilize the structure of photosystem II oxygen-evolving complex (OEC), the ion environment of oxygen evolution and protect the OEC against heat-induced inactivation. In Porphyra purpurea (Red seaweed), this protein is Photosystem II extrinsic protein V.